The sequence spans 455 residues: Probable glycine dehydrogenase (decarboxylating) subunit 1 (455 aa).

Belongs to the GcvP family. N-terminal subunit subfamily. In terms of assembly, the glycine cleavage system is composed of four proteins: P, T, L and H. In this organism, the P 'protein' is a heterodimer of two subunits.

The enzyme catalyses N(6)-[(R)-lipoyl]-L-lysyl-[glycine-cleavage complex H protein] + glycine + H(+) = N(6)-[(R)-S(8)-aminomethyldihydrolipoyl]-L-lysyl-[glycine-cleavage complex H protein] + CO2. In terms of biological role, the glycine cleavage system catalyzes the degradation of glycine. The P protein binds the alpha-amino group of glycine through its pyridoxal phosphate cofactor; CO(2) is released and the remaining methylamine moiety is then transferred to the lipoamide cofactor of the H protein. The sequence is that of Probable glycine dehydrogenase (decarboxylating) subunit 1 from Saccharolobus islandicus (strain Y.G.57.14 / Yellowstone #1) (Sulfolobus islandicus).